The primary structure comprises 547 residues: ATP synthase subunit alpha (547 aa).

173–180 (GDRQTGKT) provides a ligand contact to ATP.

Belongs to the ATPase alpha/beta chains family. In terms of assembly, F-type ATPases have 2 components, CF(1) - the catalytic core - and CF(0) - the membrane proton channel. CF(1) has five subunits: alpha(3), beta(3), gamma(1), delta(1), epsilon(1). CF(0) has three main subunits: a(1), b(2) and c(9-12). The alpha and beta chains form an alternating ring which encloses part of the gamma chain. CF(1) is attached to CF(0) by a central stalk formed by the gamma and epsilon chains, while a peripheral stalk is formed by the delta and b chains.

It is found in the cell membrane. It catalyses the reaction ATP + H2O + 4 H(+)(in) = ADP + phosphate + 5 H(+)(out). Its function is as follows. Produces ATP from ADP in the presence of a proton gradient across the membrane. The alpha chain is a regulatory subunit. In Thermobifida fusca (strain YX), this protein is ATP synthase subunit alpha.